Consider the following 150-residue polypeptide: UPF0178 protein PputGB1_5282 (150 aa).

Belongs to the UPF0178 family.

This is UPF0178 protein PputGB1_5282 from Pseudomonas putida (strain GB-1).